Reading from the N-terminus, the 181-residue chain is Mannose-specific lectin (181 aa).

The N-terminal stretch at 1-30 (MGRTTSSPKAMMRIATVAAILTILASTCMA) is a signal peptide. A Bulb-type lectin domain is found at 31-140 (RNVLTNGEGL…DIWSTGTYRR (110 aa)). Residues Q56, D58, N60, Y64, W71, A72, N74, Q88, D90, N92, Y96, V103, W104, N107, N114, Q120, D122, N124, Y128, and W133 each contribute to the alpha-D-mannopyranose site. C59 and C83 are joined by a disulfide.

In terms of assembly, homodimer.

Its subcellular location is the secreted. Functionally, mannose-specific lectin. Shows agglutinating activity towards rabbit erythrocytes. However, it does not show agglutinating activity towards human erythrocytes. Has insecticidal activity against the cotton leafworm S.littoralis and the peach potato aphid M.persicae. Also displays antiviral activity and therefore may contribute to defense against infections. The protein is Mannose-specific lectin of Allium sativum (Garlic).